We begin with the raw amino-acid sequence, 302 residues long: Methionyl-tRNA formyltransferase (302 aa).

A (6S)-5,6,7,8-tetrahydrofolate-binding site is contributed by 108-111 (SLLP). A compositionally biased stretch (basic and acidic residues) spans 279–288 (KRPMEPEEFL). A disordered region spans residues 279–302 (KRPMEPEEFLRGFPLPEGSRAHTS).

The protein belongs to the Fmt family.

It catalyses the reaction L-methionyl-tRNA(fMet) + (6R)-10-formyltetrahydrofolate = N-formyl-L-methionyl-tRNA(fMet) + (6S)-5,6,7,8-tetrahydrofolate + H(+). In terms of biological role, attaches a formyl group to the free amino group of methionyl-tRNA(fMet). The formyl group appears to play a dual role in the initiator identity of N-formylmethionyl-tRNA by promoting its recognition by IF2 and preventing the misappropriation of this tRNA by the elongation apparatus. The protein is Methionyl-tRNA formyltransferase of Cereibacter sphaeroides (strain ATCC 17023 / DSM 158 / JCM 6121 / CCUG 31486 / LMG 2827 / NBRC 12203 / NCIMB 8253 / ATH 2.4.1.) (Rhodobacter sphaeroides).